A 169-amino-acid polypeptide reads, in one-letter code: uncharacterized protein (169 aa).

The N-acetyltransferase domain maps to 4 to 160; the sequence is IEVKRLLVNY…EGVKEQLSED (157 aa).

This is an uncharacterized protein from Halalkalibacterium halodurans (strain ATCC BAA-125 / DSM 18197 / FERM 7344 / JCM 9153 / C-125) (Bacillus halodurans).